The chain runs to 47 residues: Potassium channel toxin gamma-KTx 5.1 (47 aa).

Disulfide bonds link Cys5-Cys23, Cys11-Cys34, Cys20-Cys39, and Cys24-Cys41.

Belongs to the ergtoxin family. Gamma-KTx 5 subfamily. Expressed by the venom gland.

The protein localises to the secreted. Functionally, reversibly blocks Kv11/ERG potassium channels. The sequence is that of Potassium channel toxin gamma-KTx 5.1 from Centruroides sculpturatus (Arizona bark scorpion).